The primary structure comprises 431 residues: ETS domain-containing protein Elk-4 (431 aa).

The ETS DNA-binding region spans 5–85 (ITLWQFLLQL…NGQKFVYKFV (81 aa)). Residues 114–139 (SSSSKDVENGGKDKPPQPGAKTSSRN) are disordered. Residues 118 to 128 (KDVENGGKDKP) show a composition bias toward basic and acidic residues. Lys167 is covalently cross-linked (Glycyl lysine isopeptide (Lys-Gly) (interchain with G-Cter in SUMO2)). Ser180 is modified (phosphoserine). Disordered regions lie at residues 251 to 282 (TTPP…DTDI), 294 to 323 (ENLS…KKPK), and 411 to 431 (TLSG…LQKT). Pro residues predominate over residues 261-273 (LQEPPRTPSPPLS). The segment covering 299–313 (EPKDQDSVLLEKDKV) has biased composition (basic and acidic residues).

Belongs to the ETS family. Interacts with SIRT7.

It localises to the nucleus. Its function is as follows. Involved in both transcriptional activation and repression. Interaction with SIRT7 leads to recruitment and stabilization of SIRT7 at promoters, followed by deacetylation of histone H3 at 'Lys-18' (H3K18Ac) and subsequent transcription repression. Forms a ternary complex with the serum response factor (SRF). Requires DNA-bound SRF for ternary complex formation and makes extensive DNA contacts to the 5'side of SRF, but does not bind DNA autonomously. The polypeptide is ETS domain-containing protein Elk-4 (ELK4) (Homo sapiens (Human)).